Here is a 242-residue protein sequence, read N- to C-terminus: Prosalusin (242 aa).

Positions 1–26 (MAAATRSCRPWGSLLGLIWLVSAAAA) are cleaved as a signal peptide. Positions 27–189 (SWDLSSLRCN…SSWVVYGTNY (163 aa)) are excised as a propeptide. 93-100 (GWTGTGKS) serves as a coordination point for ATP. Asn149 carries an N-linked (GlcNAc...) asparagine glycan.

Belongs to the ClpA/ClpB family. Torsin subfamily.

It localises to the secreted. Salusin may be a endocrine and/or paracrine factor able to increase intracellular calcium concentrations and induce cell mitogenesis. Salusin may also be a potent hypotensive peptide. This is Prosalusin (TOR2A) from Bos taurus (Bovine).